A 512-amino-acid polypeptide reads, in one-letter code: Cobyric acid synthase (512 aa).

The region spanning 262–442 (WLRVAAIRLP…WHGLLETDRF (181 aa)) is the GATase cobBQ-type domain. Cys343 functions as the Nucleophile in the catalytic mechanism. Residue His434 is part of the active site.

The protein belongs to the CobB/CobQ family. CobQ subfamily.

The protein operates within cofactor biosynthesis; adenosylcobalamin biosynthesis. In terms of biological role, catalyzes amidations at positions B, D, E, and G on adenosylcobyrinic A,C-diamide. NH(2) groups are provided by glutamine, and one molecule of ATP is hydrogenolyzed for each amidation. This is Cobyric acid synthase from Rhodococcus jostii (strain RHA1).